The primary structure comprises 283 residues: 5'-nucleotidase SurE (283 aa).

D14, D15, S47, and N105 together coordinate a divalent metal cation.

It belongs to the SurE nucleotidase family. A divalent metal cation is required as a cofactor.

It is found in the cytoplasm. It catalyses the reaction a ribonucleoside 5'-phosphate + H2O = a ribonucleoside + phosphate. Its function is as follows. Nucleotidase that shows phosphatase activity on nucleoside 5'-monophosphates. The chain is 5'-nucleotidase SurE from Chlamydia trachomatis serovar D (strain ATCC VR-885 / DSM 19411 / UW-3/Cx).